The following is a 165-amino-acid chain: Nucleotide-binding protein CFF8240_1664 (165 aa).

Belongs to the YajQ family.

Nucleotide-binding protein. In Campylobacter fetus subsp. fetus (strain 82-40), this protein is Nucleotide-binding protein CFF8240_1664.